The chain runs to 743 residues: Catalase-peroxidase (743 aa).

The segment at 1–21 (MSENHETVVSELNEESGGGCP) is disordered. The segment at residues 108–231 (WHSAGTYRIS…LGAVQMGLIY (124 aa)) is a cross-link (tryptophyl-tyrosyl-methioninium (Trp-Tyr) (with M-257)). Residue histidine 109 is the Proton acceptor of the active site. The tryptophyl-tyrosyl-methioninium (Tyr-Met) (with W-108) cross-link spans 231-257 (YVNPEGPNGTPDPLAAARDIRETFRRM). Residue histidine 272 participates in heme b binding. The segment at 275–296 (GKTHGAGDPDNVGPEPEGAPLE) is disordered.

The protein belongs to the peroxidase family. Peroxidase/catalase subfamily. As to quaternary structure, homodimer or homotetramer. Heme b serves as cofactor. Post-translationally, formation of the three residue Trp-Tyr-Met cross-link is important for the catalase, but not the peroxidase activity of the enzyme.

It carries out the reaction H2O2 + AH2 = A + 2 H2O. The catalysed reaction is 2 H2O2 = O2 + 2 H2O. Bifunctional enzyme with both catalase and broad-spectrum peroxidase activity. The chain is Catalase-peroxidase from Parafrankia sp. (strain EAN1pec).